Here is a 78-residue protein sequence, read N- to C-terminus: Translation initiation factor IF-1, chloroplastic (78 aa).

In terms of domain architecture, S1-like spans 1–72; sequence MEKQKLIDME…TKGRITYRLR (72 aa).

The protein belongs to the IF-1 family. In terms of assembly, component of the 30S ribosomal translation pre-initiation complex which assembles on the 30S ribosome in the order IF-2 and IF-3, IF-1 and N-formylmethionyl-tRNA(fMet); mRNA recruitment can occur at any time during PIC assembly.

The protein resides in the plastid. The protein localises to the chloroplast. One of the essential components for the initiation of protein synthesis. Stabilizes the binding of IF-2 and IF-3 on the 30S subunit to which N-formylmethionyl-tRNA(fMet) subsequently binds. Helps modulate mRNA selection, yielding the 30S pre-initiation complex (PIC). Upon addition of the 50S ribosomal subunit IF-1, IF-2 and IF-3 are released leaving the mature 70S translation initiation complex. The protein is Translation initiation factor IF-1, chloroplastic of Marchantia polymorpha (Common liverwort).